The chain runs to 555 residues: High-affinity gluconate transporter ght3 (555 aa).

The Cytoplasmic segment spans residues 1–9 (MNRFITSIL). Residues 10–30 (VVFISMSGWLQGADTGSISGI) form a helical membrane-spanning segment. The Extracellular portion of the chain corresponds to 31 to 58 (LGMRDFQSRFADRYNPISNSYSYSAWRQ). A helical membrane pass occupies residues 59-79 (ALLTGTINAGCLFGAMLSSPF). The Cytoplasmic portion of the chain corresponds to 80 to 87 (TERIGKKY). A helical membrane pass occupies residues 88–108 (SICFFSGVYIIAELLLVTAVP). Over 109 to 112 (SWIQ) the chain is Extracellular. A helical membrane pass occupies residues 113–133 (VLVGKILAGVGIGALSVLSPG). Residues 134–144 (YQSEVAPPQIR) are Cytoplasmic-facing. The chain crosses the membrane as a helical span at residues 145 to 165 (GAVVATYQIFSTGAALVAACI). Topologically, residues 166-179 (NMGTHKLRKTASWR) are extracellular. The helical transmembrane segment at 180-200 (TSFGINMLWGILLMVGVLFLP) threads the bilayer. At 201–266 (ESPRYLIYKG…IFGKDIRYRT (66 aa)) the chain is on the cytoplasmic side. Residues 267-285 (CLGFLVMLFRELIGNNYYF) traverse the membrane as a helical segment. Residues 286 to 301 (YYATQVFKGTGMTDIF) are Extracellular-facing. A helical transmembrane segment spans residues 302 to 322 (LPAVILGAINFGTTFGALYTI). Over 323 to 328 (DNLGRR) the chain is Cytoplasmic. Residues 329–349 (NPLIFGAAFQSICFFIYAAVG) traverse the membrane as a helical segment. The Extracellular segment spans residues 350–363 (DRKLIYKNGTSDHR). N-linked (GlcNAc...) asparagine glycosylation occurs at Asn357. A helical membrane pass occupies residues 364–384 (AGSVMIVFSCLFLFSYCCSWG). The Cytoplasmic segment spans residues 385–404 (PMGWVIVGETFPIRYRSKCA). The helical transmembrane segment at 405 to 425 (SVATSGNWLGNFMISFFTPFI) threads the bilayer. The Extracellular portion of the chain corresponds to 426–432 (NNAIGFK). A helical transmembrane segment spans residues 433-453 (LGYIYACINLFSSFMIFFLAK). At 454 to 555 (ETKGLTLEEV…FSEDSHPTYI (102 aa)) the chain is on the cytoplasmic side. Positions 492–509 (KEEEKREREKSKGIRGQE) are enriched in basic and acidic residues. A disordered region spans residues 492-555 (KEEEKREREK…FSEDSHPTYI (64 aa)). A compositionally biased stretch (acidic residues) spans 510-521 (EEFIENADEDNN). The segment covering 522–534 (DSSSSSGSVVSAV) has biased composition (low complexity). Over residues 545–555 (RFSEDSHPTYI) the composition is skewed to basic and acidic residues.

It belongs to the major facilitator superfamily. Sugar transporter (TC 2.A.1.1) family.

It localises to the membrane. In terms of biological role, high-affinity gluconate transporter. This Schizosaccharomyces pombe (strain 972 / ATCC 24843) (Fission yeast) protein is High-affinity gluconate transporter ght3 (ght3).